The chain runs to 329 residues: DNA-directed RNA polymerase subunit alpha (329 aa).

The tract at residues Met-1 to Glu-234 is alpha N-terminal domain (alpha-NTD). The segment at Ile-248–Asp-329 is alpha C-terminal domain (alpha-CTD).

It belongs to the RNA polymerase alpha chain family. In terms of assembly, homodimer. The RNAP catalytic core consists of 2 alpha, 1 beta, 1 beta' and 1 omega subunit. When a sigma factor is associated with the core the holoenzyme is formed, which can initiate transcription.

It catalyses the reaction RNA(n) + a ribonucleoside 5'-triphosphate = RNA(n+1) + diphosphate. DNA-dependent RNA polymerase catalyzes the transcription of DNA into RNA using the four ribonucleoside triphosphates as substrates. The chain is DNA-directed RNA polymerase subunit alpha from Saccharophagus degradans (strain 2-40 / ATCC 43961 / DSM 17024).